Reading from the N-terminus, the 1063-residue chain is Kinesin-like protein KIN-7H (1063 aa).

Positions 18 to 342 (KIYVSVRMRP…LLFASCAKEV (325 aa)) constitute a Kinesin motor domain. Residue 106–113 (GQTSSGKT) participates in ATP binding. The stretch at 351–436 (VMSDKALVKH…KNQEKETLST (86 aa)) forms a coiled coil. Positions 574–664 (SDISIGPVEN…ESNLTKNPAL (91 aa)) are disordered.

The protein belongs to the TRAFAC class myosin-kinesin ATPase superfamily. Kinesin family. KIN-7 subfamily.

The polypeptide is Kinesin-like protein KIN-7H (Arabidopsis thaliana (Mouse-ear cress)).